The following is a 255-amino-acid chain: uncharacterized protein (255 aa).

An N-terminal signal peptide occupies residues 1–23 (MKRLNKLVLGIIFLFLVISITAG). C24 carries the N-palmitoyl cysteine lipid modification. C24 carries the S-diacylglycerol cysteine lipid modification.

The protein belongs to the staphylococcal tandem lipoprotein family.

It localises to the cell membrane. This is an uncharacterized protein from Staphylococcus aureus (strain USA300).